A 374-amino-acid chain; its full sequence is Patatin-2-Kuras 4 (374 aa).

An N-terminal signal peptide occupies residues 1 to 11 (MILATTSSTCA). The PNPLA domain maps to 20–217 (LSIDGGGIKG…TVGDPALLSL (198 aa)). The GXGXXG motif lies at 24 to 29 (GGGIKG). Positions 63–67 (GTSTG) match the GXSXG motif. Serine 65 serves as the catalytic Nucleophile. The N-linked (GlcNAc...) asparagine glycan is linked to asparagine 103. Aspartate 203 functions as the Proton acceptor in the catalytic mechanism. Residues 203-205 (DGG) carry the DGA/G motif. Positions 309–372 (ENALTGTTTE…DRKKLRANKA (64 aa)) form a coiled coil.

Belongs to the patatin family.

The protein localises to the vacuole. Its function is as follows. Probable lipolytic acyl hydrolase (LAH), an activity which is thought to be involved in the response of tubers to pathogens. This chain is Patatin-2-Kuras 4 (pat2-k4), found in Solanum tuberosum (Potato).